Reading from the N-terminus, the 208-residue chain is Intraflagellar transport protein 43 homolog (208 aa).

M1 carries the N-acetylmethionine modification. A disordered region spans residues 18 to 65 (SRAKMGRRAQQESAQAENHLNGKNSSLTLTGETSSAKLPRCRQGGWAG). Residues 28–53 (QESAQAENHLNGKNSSLTLTGETSSA) show a composition bias toward polar residues. Phosphoserine is present on S78.

The protein belongs to the IFT43 family. Component of the IFT complex A (IFT-A) complex. IFT-A complex is divided into a core subcomplex composed of IFT122:IFT140:WDR19 which is associated with TULP3 and a peripheral subcomplex composed of IFT43:WDR35:TTC21B. Interacts directy with IFT122, WDR35 and TTC21B. In terms of tissue distribution, expressed in the retina, predominantly in the photoreceptor outer segment.

The protein localises to the cytoplasm. It localises to the cytoskeleton. The protein resides in the cell projection. It is found in the cilium. Functionally, as a component of IFT complex A (IFT-A), a complex required for retrograde ciliary transport and entry into cilia of G protein-coupled receptors (GPCRs), it is involved in ciliogenesis. Involved in retrograde ciliary transport along microtubules from the ciliary tip to the base. The sequence is that of Intraflagellar transport protein 43 homolog from Homo sapiens (Human).